Reading from the N-terminus, the 574-residue chain is Cholinesterase (574 aa).

Asparagine 57 carries an N-linked (GlcNAc...) asparagine glycan. Cysteines 65 and 92 form a disulfide. A glycan (N-linked (GlcNAc...) asparagine) is linked at asparagine 106. Residue 116–117 participates in substrate binding; sequence GG. The active-site Acyl-ester intermediate is the serine 198. Serine 198 bears the Phosphoserine mark. Asparagine 241 and asparagine 256 each carry an N-linked (GlcNAc...) asparagine glycan. Cysteines 252 and 263 form a disulfide. Glutamate 325 serves as the catalytic Charge relay system. An N-linked (GlcNAc...) asparagine glycan is attached at asparagine 341. Cysteine 400 and cysteine 519 are joined by a disulfide. The active-site Charge relay system is histidine 438. N-linked (GlcNAc...) asparagine glycosylation is found at asparagine 455, asparagine 481, and asparagine 486.

This sequence belongs to the type-B carboxylesterase/lipase family. In terms of assembly, homotetramer; disulfide-linked. Dimer of dimers. Detected in blood plasma (at protein level). Present in most cells except erythrocytes.

It is found in the secreted. The enzyme catalyses an acylcholine + H2O = a carboxylate + choline + H(+). Its function is as follows. Esterase with broad substrate specificity. Contributes to the inactivation of the neurotransmitter acetylcholine. Can degrade neurotoxic organophosphate esters. The polypeptide is Cholinesterase (BCHE) (Equus caballus (Horse)).